Here is a 343-residue protein sequence, read N- to C-terminus: ATP phosphoribosyltransferase regulatory subunit (343 aa).

The tract at residues Arg-324–Arg-343 is disordered. Basic residues predominate over residues Gly-327–Arg-343.

Belongs to the class-II aminoacyl-tRNA synthetase family. HisZ subfamily. In terms of assembly, heteromultimer composed of HisG and HisZ subunits.

It is found in the cytoplasm. It participates in amino-acid biosynthesis; L-histidine biosynthesis; L-histidine from 5-phospho-alpha-D-ribose 1-diphosphate: step 1/9. Functionally, required for the first step of histidine biosynthesis. May allow the feedback regulation of ATP phosphoribosyltransferase activity by histidine. In Anaeromyxobacter sp. (strain Fw109-5), this protein is ATP phosphoribosyltransferase regulatory subunit.